The following is a 930-amino-acid chain: RNA-binding protein 10 (930 aa).

Composition is skewed to basic and acidic residues over residues 1 to 14 and 21 to 45; these read MEYERRGGRGDRTG and RSQDDSGENRSRDHDYRDMDYRSYP. The segment at 1–127 is disordered; sequence MEYERRGGRG…EDEEEEEEKA (127 aa). Residues 59–70 are compositionally biased toward acidic residues; it reads DSSEEQSAEDSY. A phosphoserine mark is found at Ser61 and Ser89. The span at 80 to 89 shows a compositional bias: basic residues; the sequence is RRRRRRHRHS. Over residues 98–111 the composition is skewed to basic and acidic residues; it reads RDGDYRDQDYRTEQ. Residues 112 to 125 show a composition bias toward acidic residues; the sequence is GEEEEEEDEEEEEE. Residues 129 to 209 form the RRM 1 domain; it reads NIVMLRMLPQ…QKVSMHYSDP (81 aa). The segment at 212–242 adopts a RanBP2-type zinc-finger fold; it reads KINEDWLCNKCGVQNFKRREKCFKCGVPKSE. Residues 300-384 form the RRM 2 domain; it reads DTIILRNLNP…KTINVEFAKG (85 aa). Lys383 is modified (N6-acetyllysine). Disordered regions lie at residues 464 to 487, 503 to 522, 537 to 566, 620 to 646, and 712 to 753; these read GPGMTGTKGDPAGTGPEASLEAGA, APGLYQQSAEGSSGQSTATN, ELQSPTQPSSSAFPPATSPTAPEAYSQYPV, EQSADGHKDTGASSKEGKEKKEKHKTK, and DLPK…EEKL. The segment covering 507–522 has biased composition (polar residues); that stretch reads YQQSAEGSSGQSTATN. Positions 540–562 are enriched in low complexity; it reads SPTQPSSSAFPPATSPTAPEAYS. Over residues 623 to 639 the composition is skewed to basic and acidic residues; it reads ADGHKDTGASSKEGKEK. A phosphoserine mark is found at Ser718, Ser723, Ser733, Ser736, and Ser738. The segment covering 743–753 has biased composition (basic and acidic residues); the sequence is ERGGPEREEKL. The C2H2-type; atypical zinc-finger motif lies at 759–784; the sequence is LACLLCRRQFPSKEALIRHQQLSGLH. Ser781, Ser797, and Ser845 each carry phosphoserine. The segment at 818–861 is disordered; it reads AAERREKYGIPEPPEPKRRKYGGISTASVDFEQPTRDGLGSDNI. One can recognise a G-patch domain in the interval 858 to 904; sequence SDNIGSRMLQAMGWKEGSGLGRKKQGIVTPIEAQTRVRGSGLGARGS. Position 902 is an omega-N-methylarginine (Arg902).

In terms of assembly, associates with the spliceosome. Component of a large chromatin remodeling complex, at least composed of MYSM1, PCAF, RBM10 and KIF11/TRIP5.

It is found in the nucleus. Binds to ssRNA containing the consensus sequence 5'-AGGUAA-3'. May be involved in post-transcriptional processing, most probably in mRNA splicing. Binds to RNA homopolymers, with a preference for poly(G) and poly(U) and little for poly(A). May bind to specific miRNA hairpins. In Mus musculus (Mouse), this protein is RNA-binding protein 10.